The sequence spans 402 residues: Ferredoxin--NADP reductase (402 aa).

In terms of domain architecture, CpcD-like spans Asn-18 to Ala-74. The interval Ile-80–Lys-101 is disordered. The segment covering Gln-85 to Ser-99 has biased composition (low complexity). The region spanning Lys-120–Leu-245 is the FAD-binding FR-type domain. FAD contacts are provided by residues Arg-179–Ser-182, Cys-200–Arg-202, Tyr-206, Val-218–Ser-220, and Thr-260. NADP(+)-binding residues include Ser-182 and Arg-202. NADP(+) contacts are provided by residues Thr-260, Val-292–Pro-293, Ser-322–Arg-323, Lys-332, Lys-332–Gln-336, Gly-361–Leu-362, and Glu-400.

This sequence belongs to the ferredoxin--NADP reductase type 1 family. Requires FAD as cofactor.

It localises to the cellular thylakoid membrane. The catalysed reaction is 2 reduced [2Fe-2S]-[ferredoxin] + NADP(+) + H(+) = 2 oxidized [2Fe-2S]-[ferredoxin] + NADPH. This Picosynechococcus sp. (strain ATCC 27264 / PCC 7002 / PR-6) (Agmenellum quadruplicatum) protein is Ferredoxin--NADP reductase (petH).